Reading from the N-terminus, the 132-residue chain is ATP synthase epsilon chain (132 aa).

This sequence belongs to the ATPase epsilon chain family. In terms of assembly, F-type ATPases have 2 components, CF(1) - the catalytic core - and CF(0) - the membrane proton channel. CF(1) has five subunits: alpha(3), beta(3), gamma(1), delta(1), epsilon(1). CF(0) has three main subunits: a, b and c.

The protein localises to the cell membrane. Functionally, produces ATP from ADP in the presence of a proton gradient across the membrane. In Geobacillus stearothermophilus (Bacillus stearothermophilus), this protein is ATP synthase epsilon chain (atpC).